A 277-amino-acid chain; its full sequence is Myelin proteolipid protein (277 aa).

Over 2-10 (GLLECCARC) the chain is Cytoplasmic. 3 S-palmitoyl cysteine lipidation sites follow: Cys6, Cys7, and Cys10. The helical transmembrane segment at 11–36 (LIGAPFASLVATGLCFFGVALFCGCG) threads the bilayer. The Extracellular segment spans residues 37 to 59 (HEALTGTEQLIETYFSKNYQDYE). Residues 60–88 (YLIDVIHAFQYVIYGTASFFFLYGALLLA) traverse the membrane as a helical segment. Over 89-151 (EGFYTTGAVR…LGKWLGHPDK (63 aa)) the chain is Cytoplasmic. Residues Cys109, Cys139, and Cys141 are each lipidated (S-palmitoyl cysteine). The helical transmembrane segment at 152-178 (FVGITYVLTIVWLLAFACSAVPVYIYF) threads the bilayer. The Extracellular segment spans residues 179–238 (NTWTTCQSIAFPTKTTASIGTLCADARMYGVLPWNAFPGKVCGSNLLSICKTSEFQMTFH). 2 cysteine pairs are disulfide-bonded: Cys184/Cys228 and Cys201/Cys220. The O-palmitoyl threonine moiety is linked to residue Thr199. The helical transmembrane segment at 239-268 (LFIAAFVGAAATLVSLLTFMIAATYNFAVL) threads the bilayer. The Cytoplasmic portion of the chain corresponds to 269 to 277 (KLMGRGTKF).

It belongs to the myelin proteolipid protein family.

The protein localises to the cell membrane. Its function is as follows. This is the major myelin protein from the central nervous system. It plays an important role in the formation or maintenance of the multilamellar structure of myelin. In Gallus gallus (Chicken), this protein is Myelin proteolipid protein (PLP1).